The following is a 425-amino-acid chain: Ribonuclease T2-like (425 aa).

An N-terminal signal peptide occupies residues 1-18 (MLLNKGLLASLLAYTTTA). 5 disulfides stabilise this stretch: C32–C51, C40–C99, C50–C175, C107–C167, and C245–C281. N-linked (GlcNAc...) asparagine glycosylation is present at N42. Residue H92 is part of the active site. N-linked (GlcNAc...) asparagine glycosylation is present at N134. Catalysis depends on residues E160 and H164.

This sequence belongs to the RNase T2 family.

Its subcellular location is the vacuole lumen. The protein localises to the cytoplasm. The enzyme catalyses a ribonucleotidyl-ribonucleotide-RNA + H2O = a 3'-end 3'-phospho-ribonucleotide-RNA + a 5'-end dephospho-ribonucleoside-RNA + H(+). Rnase which modulates cell survival under stress conditions. Released from the vacuole to the cytoplasm during stress to promote tRNA and rRNA cleavage and to activate separately a downstream pathway that promotes cell death. Involved in cell size, vacuolar morphology and growth at high temperatures and high salt concentration. In Kluyveromyces lactis (strain ATCC 8585 / CBS 2359 / DSM 70799 / NBRC 1267 / NRRL Y-1140 / WM37) (Yeast), this protein is Ribonuclease T2-like (RNY1).